We begin with the raw amino-acid sequence, 171 residues long: N5-carboxyaminoimidazole ribonucleotide mutase (171 aa).

Residues Ser-13, Asp-16, and Arg-43 each coordinate substrate.

It belongs to the AIR carboxylase family. Class I subfamily.

The catalysed reaction is 5-carboxyamino-1-(5-phospho-D-ribosyl)imidazole + H(+) = 5-amino-1-(5-phospho-D-ribosyl)imidazole-4-carboxylate. The protein operates within purine metabolism; IMP biosynthesis via de novo pathway; 5-amino-1-(5-phospho-D-ribosyl)imidazole-4-carboxylate from 5-amino-1-(5-phospho-D-ribosyl)imidazole (N5-CAIR route): step 2/2. Its function is as follows. Catalyzes the conversion of N5-carboxyaminoimidazole ribonucleotide (N5-CAIR) to 4-carboxy-5-aminoimidazole ribonucleotide (CAIR). This is N5-carboxyaminoimidazole ribonucleotide mutase from Mycobacterium leprae (strain TN).